The sequence spans 414 residues: L-cysteine:1D-myo-inositol 2-amino-2-deoxy-alpha-D-glucopyranoside ligase (414 aa).

Zn(2+) is bound at residue C43. Residues 43 to 46 (CGIT), T58, and 81 to 83 (NIT) each bind L-cysteinyl-5'-AMP. A 'HIGH' region motif is present at residues 45-55 (ITPYDATHLGH). The short motif at 189-194 (ERGGDP) is the 'ERGGDP' region element. W229 lines the L-cysteinyl-5'-AMP pocket. Position 233 (C233) interacts with Zn(2+). An L-cysteinyl-5'-AMP-binding site is contributed by 251–253 (GSD). A Zn(2+)-binding site is contributed by H258. L-cysteinyl-5'-AMP is bound at residue I285. Positions 291–295 (KMSKS) match the 'KMSKS' region motif.

It belongs to the class-I aminoacyl-tRNA synthetase family. MshC subfamily. Monomer. The cofactor is Zn(2+).

The catalysed reaction is 1D-myo-inositol 2-amino-2-deoxy-alpha-D-glucopyranoside + L-cysteine + ATP = 1D-myo-inositol 2-(L-cysteinylamino)-2-deoxy-alpha-D-glucopyranoside + AMP + diphosphate + H(+). Its function is as follows. Catalyzes the ATP-dependent condensation of GlcN-Ins and L-cysteine to form L-Cys-GlcN-Ins. The protein is L-cysteine:1D-myo-inositol 2-amino-2-deoxy-alpha-D-glucopyranoside ligase (mshC) of Mycobacterium bovis (strain ATCC BAA-935 / AF2122/97).